Reading from the N-terminus, the 216-residue chain is RNA pyrophosphohydrolase (216 aa).

The Nudix hydrolase domain occupies 6-149; it reads GFRPNVGIIL…KRDVYQLALT (144 aa). The Nudix box motif lies at 38–59; that stretch reads GGIKYGETPMQAMYRELHEETG. Residues 159–180 form a disordered region; that stretch reads AQRTDKSRGPRAPRYPRVSNGH.

Belongs to the Nudix hydrolase family. RppH subfamily. It depends on a divalent metal cation as a cofactor.

In terms of biological role, accelerates the degradation of transcripts by removing pyrophosphate from the 5'-end of triphosphorylated RNA, leading to a more labile monophosphorylated state that can stimulate subsequent ribonuclease cleavage. In Burkholderia thailandensis (strain ATCC 700388 / DSM 13276 / CCUG 48851 / CIP 106301 / E264), this protein is RNA pyrophosphohydrolase.